The primary structure comprises 183 residues: Ras-like protein (183 aa).

Residue 10–17 participates in GTP binding; that stretch reads GAGGVGKS. An Effector region motif is present at residues 32–40; the sequence is YDPTIEDSY. GTP is bound by residues 57 to 61 and 116 to 119; these read DTAGQ and NKCD.

It belongs to the small GTPase superfamily. Ras family.

Its subcellular location is the cell membrane. It carries out the reaction GTP + H2O = GDP + phosphate + H(+). Its activity is regulated as follows. Alternates between an inactive form bound to GDP and an active form bound to GTP. Activated by a guanine nucleotide-exchange factor (GEF) and inactivated by a GTPase-activating protein (GAP). Ras proteins bind GDP/GTP and possess intrinsic GTPase activity. This Carassius auratus (Goldfish) protein is Ras-like protein.